Reading from the N-terminus, the 512-residue chain is Lysine--tRNA ligase (512 aa).

The Mg(2+) site is built by Glu-421 and Glu-428.

It belongs to the class-II aminoacyl-tRNA synthetase family. In terms of assembly, homodimer. The cofactor is Mg(2+).

It localises to the cytoplasm. It catalyses the reaction tRNA(Lys) + L-lysine + ATP = L-lysyl-tRNA(Lys) + AMP + diphosphate. This Aeromonas salmonicida (strain A449) protein is Lysine--tRNA ligase.